Consider the following 155-residue polypeptide: Biotin carboxyl carrier protein of acetyl-CoA carboxylase (155 aa).

The Biotinyl-binding domain occupies 72–155 (AASDELSGHL…EFDEPLIVIE (84 aa)). An N6-biotinyllysine modification is found at Lys-121.

Homodimer.

Its pathway is lipid metabolism; fatty acid biosynthesis. In terms of biological role, this protein is a component of the acetyl coenzyme A carboxylase complex; first, biotin carboxylase catalyzes the carboxylation of the carrier protein and then the transcarboxylase transfers the carboxyl group to form malonyl-CoA. The protein is Biotin carboxyl carrier protein of acetyl-CoA carboxylase (accB) of Haemophilus influenzae (strain ATCC 51907 / DSM 11121 / KW20 / Rd).